Here is a 431-residue protein sequence, read N- to C-terminus: Anaerobic glycerol-3-phosphate dehydrogenase subunit B (431 aa).

Belongs to the anaerobic G-3-P dehydrogenase subunit B family. Composed of a catalytic GlpA/B dimer and of membrane bound GlpC. The cofactor is FMN.

The enzyme catalyses a quinone + sn-glycerol 3-phosphate = dihydroxyacetone phosphate + a quinol. Its pathway is polyol metabolism; glycerol degradation via glycerol kinase pathway; glycerone phosphate from sn-glycerol 3-phosphate (anaerobic route): step 1/1. Functionally, conversion of glycerol 3-phosphate to dihydroxyacetone. Uses fumarate or nitrate as electron acceptor. The polypeptide is Anaerobic glycerol-3-phosphate dehydrogenase subunit B (Mannheimia succiniciproducens (strain KCTC 0769BP / MBEL55E)).